The following is a 201-amino-acid chain: Small ribosomal subunit protein uS4 (201 aa).

An S4 RNA-binding domain is found at 91–151; it reads SRLDNVVYRA…EKSQKMNWFE (61 aa).

This sequence belongs to the universal ribosomal protein uS4 family. Part of the 30S ribosomal subunit. Contacts protein S5. The interaction surface between S4 and S5 is involved in control of translational fidelity.

Its function is as follows. One of the primary rRNA binding proteins, it binds directly to 16S rRNA where it nucleates assembly of the body of the 30S subunit. With S5 and S12 plays an important role in translational accuracy. The chain is Small ribosomal subunit protein uS4 from Corynebacterium efficiens (strain DSM 44549 / YS-314 / AJ 12310 / JCM 11189 / NBRC 100395).